Reading from the N-terminus, the 406-residue chain is Purine nucleoside permease (406 aa).

The N-terminal stretch at 1–22 is a signal peptide; that stretch reads MKLSTLFTLATTISTLTTFTIA.

Belongs to the NUP family.

Mammalian nucleoside transport inhibitors dipyridamole and NBMPR inhibit adenosine transport by NUP. Nucleoside permease that transports adenosine and guanosine. Does not show any transport activities towards cytidine, adenine, guanine, uridine, and uracil. The protein is Purine nucleoside permease of Candida albicans (Yeast).